The following is a 185-amino-acid chain: Recombination protein RecR (185 aa).

Residues 44–59 form a C4-type zinc finger; it reads CSVCFHLSSEPVCEIC. Positions 67 to 161 constitute a Toprim domain; that stretch reads NTICVVADSR…KVTRIAFGLP (95 aa).

The protein belongs to the RecR family.

Functionally, may play a role in DNA repair. It seems to be involved in an RecBC-independent recombinational process of DNA repair. It may act with RecF and RecO. This chain is Recombination protein RecR, found in Trichormus variabilis (strain ATCC 29413 / PCC 7937) (Anabaena variabilis).